The following is a 579-amino-acid chain: Proline--tRNA ligase (579 aa).

This sequence belongs to the class-II aminoacyl-tRNA synthetase family. ProS type 1 subfamily. Homodimer.

The protein resides in the cytoplasm. The catalysed reaction is tRNA(Pro) + L-proline + ATP = L-prolyl-tRNA(Pro) + AMP + diphosphate. Catalyzes the attachment of proline to tRNA(Pro) in a two-step reaction: proline is first activated by ATP to form Pro-AMP and then transferred to the acceptor end of tRNA(Pro). As ProRS can inadvertently accommodate and process non-cognate amino acids such as alanine and cysteine, to avoid such errors it has two additional distinct editing activities against alanine. One activity is designated as 'pretransfer' editing and involves the tRNA(Pro)-independent hydrolysis of activated Ala-AMP. The other activity is designated 'posttransfer' editing and involves deacylation of mischarged Ala-tRNA(Pro). The misacylated Cys-tRNA(Pro) is not edited by ProRS. This chain is Proline--tRNA ligase, found in Hamiltonella defensa subsp. Acyrthosiphon pisum (strain 5AT).